The primary structure comprises 600 residues: DNA repair and recombination protein mus-11 (600 aa).

A DNA-binding region spans residues 148–152 (KRALR). Polar residues predominate over residues 268–319 (LNPQAQQSRPLSRSGSTGSLNTRQQPQNSHQFTARAQSRPPQQQLNSNQSRP). Disordered stretches follow at residues 268–357 (LNPQ…AGAA) and 387–600 (APKP…QRLA). 2 stretches are compositionally biased toward low complexity: residues 325 to 343 (NNSSNANTPNNPQNYTTPQ) and 458 to 470 (ARSASGSFSRAGP). The span at 502-512 (GFSSSPSTNRG) shows a compositional bias: polar residues. 2 stretches are compositionally biased toward low complexity: residues 540 to 564 (SATTTTIAANTTAGSATGGNAAPSA) and 577 to 591 (ANASNATAAGAATSG).

This sequence belongs to the RAD52 family. In terms of assembly, part of a complex that includes mei-3/rad51 and mus-11/rad52.

The protein resides in the nucleus. Its function is as follows. Involved in DNA double-strand break (DSB) repair and recombination. Promotes the annealing of complementary single-stranded DNA and by stimulation of the mei-3/rad51 recombinase. In Neurospora crassa (strain ATCC 24698 / 74-OR23-1A / CBS 708.71 / DSM 1257 / FGSC 987), this protein is DNA repair and recombination protein mus-11 (mus-11).